A 358-amino-acid polypeptide reads, in one-letter code: Putative zinc metalloprotease RC0203 (358 aa).

His-18 serves as a coordination point for Zn(2+). Residue Glu-19 is part of the active site. A Zn(2+)-binding site is contributed by His-22. Transmembrane regions (helical) follow at residues 52 to 71 (GVRWKICLIPLGGYVKIYGY), 97 to 119 (FLIVAAGPLINYLLAIIIFAGFY), 285 to 307 (YLLFIAMLSVNLGLLNLLPIPVL), and 332 to 351 (ILLQLGAIIIIFLIIIAVSN). The PDZ domain maps to 102–186 (AGPLINYLLA…STLTIERKSE (85 aa)).

This sequence belongs to the peptidase M50B family. Requires Zn(2+) as cofactor.

The protein localises to the cell inner membrane. This is Putative zinc metalloprotease RC0203 from Rickettsia conorii (strain ATCC VR-613 / Malish 7).